The sequence spans 190 residues: Ribosome-recycling factor (190 aa).

The protein belongs to the RRF family.

It localises to the cytoplasm. Responsible for the release of ribosomes from messenger RNA at the termination of protein biosynthesis. May increase the efficiency of translation by recycling ribosomes from one round of translation to another. The sequence is that of Ribosome-recycling factor from Fusobacterium nucleatum subsp. nucleatum (strain ATCC 25586 / DSM 15643 / BCRC 10681 / CIP 101130 / JCM 8532 / KCTC 2640 / LMG 13131 / VPI 4355).